Consider the following 1377-residue polypeptide: MSGKPAARQGDMTQYGGSIVQGSAGVRIGAPTGVACSVCPGGVTSGHPVNPLLGAKVLPGETDIALPGPLPFILSRTYSSYRTKTPAPVGSLGPGWKMPADIRLQLRDNTLILSDNGGRSLYFEHLFPGEDGYSRSESLWLVRGGVAKLDEGHRLAALWQALPEELRLSPHRYLATNSPQGPWWLLGWCERVPEADEVLPAPLPPYRVLTGLVDRFGRTQTFHREAAGEFSGEITGVTDGAWRHFRLVLTTQAQRAEEARQQAISGGTEPSAFPDTLPGYTEYGRDNGIRLSAVWLTHDPEYPENLPAAPLVRYGWTPRGELAVVYDRSGKQVRSFTYDDKYRGRMVAHRHTGRPEIRYRYDSDGRVTEQLNPAGLSYTYQYEKDRITITDSLDRREVLHTQGEAGLKRVVKKEHADGSVTQSQFDAVGRLRAQTDAAGRTTEYSPDVVTGLITRITTPDGRASAFYYNHHNQLTSATGPDGLELRREYDELGRLIQETAPDGDITRYRYDNPHSDLPCATEDATGSRKTMTWSRYGQLLSFTDCSGYVTRYDHDRFGQMTAVHREEGLSQYRAYDSRGQLIAVKDTQGHETRYEYNIAGDLTAVIAPDGSRNGTQYDAWGKAVRTTQGGLTRSMEYDAAGRVIRLTSENGSHTTFRYDVLDRLIQETGFDGRTQRYHHDLTGKLIRSEDEGLVTHWHYDEADRLTHRTVKGETAERWQYDERGWLTDISHISEGHRVAVHYRYDEKGRLTGERQTVHHPQTEALLWQHETRHAYNAQGLANRCIPDSLPAVEWLTYGSGYLAGMKLGDTPLVEYTRDRLHRETLRSFGRYELTTAYTPAGQLQSQHLNSLLSDRDYTWNDNGELIRISSPRQTRSYSYSTTGRLTGVHTTAANLDIRIPYATDPAGNRLPDPELHPDSTLSMWPDNRIARDAHYLYRYDRHGRLTEKTDLIPEGVIRTDDERTHRYHYDSQHRLVHYTRTQYEEPLVESRYLYDPLGRRVAKRVWRRERDLTGWMSLSRKPQVTWYGWDGDRLTTIQNDRTRIQTIYQPGSFTPLIRVETATGELAKTQRRSLADALQQSGGEDGGSVVFPPVLVQMLDRLESEILADRVSEESRRWLASCGLTVEQMQNQMDPVYTPARKIHLYHCDHRGLPLALISKEGTTEWCAEYDEWGNLLNEENPHQLQQLIRLPGQQYDEESGLYYNRHRYYDPLQGRYITQDPIGLKGGWNFYQYPLNPVTNTDPLGLEVFPRPFPLPIPWPKSPAQQQADDNAAKALTKWWNDTASQRIFDSLILNNPGLALDITMIASRGNVADTGITDRVNDIINDRFWSDGKKPDRCDVLQELIDCGDISAKDAKSTQKAWNCRHSRQSNDKKR.

A run of 28 repeats spans residues 330–352, 353–374, 375–417, 418–438, 439–460, 461–481, 482–502, 503–525, 526–546, 547–567, 568–588, 589–609, 610–629, 630–650, 651–671, 672–691, 692–711, 712–734, 735–758, 808–828, 829–850, 851–871, 872–894, 895–930, 931–959, 960–984, 985–1019, and 1162–1186. Positions 330–1186 are 28 X approximate tandem repeats; it reads GKQVRSFTYD…LNEENPHQLQ (857 aa). Residues 1356–1377 form a disordered region; it reads DAKSTQKAWNCRHSRQSNDKKR.

It belongs to the RHS family.

Its function is as follows. Rhs elements have a nonessential function. They may play an important role in the natural ecology of the cell. The chain is Protein RhsA (rhsA) from Escherichia coli (strain K12).